The chain runs to 339 residues: Annexin A2 (339 aa).

Residue Ser2 is modified to N-acetylserine. Residues 2–24 (STVHEILSKLSLEGDHSLPPSAY) are S100A10-binding site. Phosphotyrosine; by SRC is present on Tyr24. Thr26 carries the post-translational modification Phosphothreonine; by PKC. 4 Annexin repeats span residues 33 to 104 (FDAD…GLLK), 105 to 176 (TPSQ…ALAK), 189 to 261 (ELID…NLVQ), and 265 to 336 (NKQL…NLCG).

It belongs to the annexin family. As to quaternary structure, heterotetramer containing 2 light chains of S100A10/p11 and 2 heavy chains of ANXA2/p36.

Its subcellular location is the secreted. It localises to the extracellular space. The protein localises to the extracellular matrix. It is found in the basement membrane. Functionally, calcium-regulated membrane-binding protein whose affinity for calcium is greatly enhanced by anionic phospholipids. It binds two calcium ions with high affinity. The polypeptide is Annexin A2 (ANXA2) (Gallus gallus (Chicken)).